We begin with the raw amino-acid sequence, 146 residues long: MAGNSILLAALSVLSACQQSYFAMQVGKARSKYKVTPPSVSGSPDFERIFRAQQNCVEFYPIFIITLWMAGWYFNQVFATCLGLVYIYSRHQYFWGYAEAAKKRVTGFRLSLGVLALLTVLGAVGILNSFLDEYLDIDIAKKLRHF.

3 helical membrane-spanning segments follow: residues 6–26 (ILLA…AMQV), 59–79 (FYPI…QVFA), and 111–131 (SLGV…NSFL).

The protein belongs to the MAPEG family. In terms of assembly, homotrimer.

The protein localises to the endoplasmic reticulum membrane. It localises to the microsome membrane. It carries out the reaction RX + glutathione = an S-substituted glutathione + a halide anion + H(+). The catalysed reaction is 1-chloro-2,4-dinitrobenzene + glutathione = 2,4-dinitrophenyl-S-glutathione + chloride + H(+). The enzyme catalyses leukotriene C4 = leukotriene A4 + glutathione. It catalyses the reaction (5S)-hydroperoxy-(6E,8Z,11Z,14Z)-eicosatetraenoate + 2 glutathione = (5S)-hydroxy-(6E,8Z,11Z,14Z)-eicosatetraenoate + glutathione disulfide + H2O. Each monomer binds on GSH molecule but only one subunit is catalytically active. Functionally, catalyzes several different glutathione-dependent reactions. Catalyzes the glutathione-dependent reduction of lipid hydroperoxides, such as 5-HPETE. Has glutathione transferase activity, toward xenobiotic electrophiles, such as 1-chloro-2, 4-dinitrobenzene (CDNB). Also catalyzes the conjugation of leukotriene A4 with reduced glutathione to form leukotriene C4 (LTC4). Involved in oxidative DNA damage induced by ER stress and anticancer agents by activating LTC4 biosynthetic machinery in nonimmune cells. The polypeptide is Microsomal glutathione S-transferase 2 (MGST2) (Bos taurus (Bovine)).